Consider the following 321-residue polypeptide: Probable arabinan endo-1,5-alpha-L-arabinosidase A (321 aa).

A signal peptide spans 1–19 (MHPSTFVTTIACLAGLAHG). Residue D34 is the Proton acceptor of the active site. The active-site Proton donor is the E200.

It belongs to the glycosyl hydrolase 43 family.

Its subcellular location is the secreted. The enzyme catalyses Endohydrolysis of (1-&gt;5)-alpha-arabinofuranosidic linkages in (1-&gt;5)-arabinans.. It functions in the pathway glycan metabolism; L-arabinan degradation. Endo-1,5-alpha-L-arabinanase involved in degradation of pectin. Its preferred substrate is linear 1,5-alpha-L-arabinan. This chain is Probable arabinan endo-1,5-alpha-L-arabinosidase A (abnA), found in Aspergillus clavatus (strain ATCC 1007 / CBS 513.65 / DSM 816 / NCTC 3887 / NRRL 1 / QM 1276 / 107).